Consider the following 299-residue polypeptide: Non-structural protein V (299 aa).

A compositionally biased stretch (acidic residues) spans 137 to 160; that stretch reads DGVEVWGGDEESENSDVDSGEPDP. Disordered stretches follow at residues 137–186 and 205–229; these read DGVE…ETVE and KAGK…KPIK. Zn(2+) contacts are provided by His-232, Cys-251, Cys-255, Cys-267, Cys-269, Cys-272, Cys-276, and Cys-279.

Belongs to the paramyxoviruses V protein family. As to quaternary structure, interacts with host IFIH1/MDA5 and DHX58/LGP2. Interacts with host TYK2; this interaction inhibits the type I interferon signaling pathway.

It localises to the host cytoplasm. Its function is as follows. Plays an essential role in the inhibition of host immune response. Prevents the establishment of cellular antiviral state by blocking interferon-alpha/beta (IFN-alpha/beta) production and signaling pathway. Interacts with host IFIH1/MDA5 and DHX58/LGP2 to inhibit the transduction pathway involved in the activation of IFN-beta promoter, thus protecting the virus against cell antiviral state. Blocks the type I interferon signaling pathway by interacting with host TYK2 and thereby inhibiting downstream STAT1 and STAT2 phosphorylation. This is Non-structural protein V (P/V) from Rinderpest virus (strain Kabete O) (RDV).